A 179-amino-acid polypeptide reads, in one-letter code: Large ribosomal subunit protein uL5 (179 aa).

Belongs to the universal ribosomal protein uL5 family. Part of the 50S ribosomal subunit; part of the 5S rRNA/L5/L18/L25 subcomplex. Contacts the 5S rRNA and the P site tRNA. Forms a bridge to the 30S subunit in the 70S ribosome.

This is one of the proteins that bind and probably mediate the attachment of the 5S RNA into the large ribosomal subunit, where it forms part of the central protuberance. In the 70S ribosome it contacts protein S13 of the 30S subunit (bridge B1b), connecting the 2 subunits; this bridge is implicated in subunit movement. Contacts the P site tRNA; the 5S rRNA and some of its associated proteins might help stabilize positioning of ribosome-bound tRNAs. This chain is Large ribosomal subunit protein uL5, found in Prochlorococcus marinus (strain MIT 9303).